The chain runs to 513 residues: Histidine ammonia-lyase (513 aa).

Residues 145–147 (ASG) constitute a cross-link (5-imidazolinone (Ala-Gly)). A 2,3-didehydroalanine (Ser) modification is found at Ser146.

Belongs to the PAL/histidase family. Contains an active site 4-methylidene-imidazol-5-one (MIO), which is formed autocatalytically by cyclization and dehydration of residues Ala-Ser-Gly.

It is found in the cytoplasm. It carries out the reaction L-histidine = trans-urocanate + NH4(+). Its pathway is amino-acid degradation; L-histidine degradation into L-glutamate; N-formimidoyl-L-glutamate from L-histidine: step 1/3. The protein is Histidine ammonia-lyase of Vibrio vulnificus (strain CMCP6).